Consider the following 464-residue polypeptide: tRNA modification GTPase MnmE (464 aa).

(6S)-5-formyl-5,6,7,8-tetrahydrofolate contacts are provided by Arg27, Glu90, and Lys129. The region spanning 222–384 (GVTLVLAGSV…LYDKIKTLIS (163 aa)) is the TrmE-type G domain. GTP-binding positions include 232-237 (NAGKSS), 251-257 (SSYPGTT), and 276-279 (DTAG). Residues Ser236 and Thr257 each contribute to the Mg(2+) site. Lys464 lines the (6S)-5-formyl-5,6,7,8-tetrahydrofolate pocket.

Belongs to the TRAFAC class TrmE-Era-EngA-EngB-Septin-like GTPase superfamily. TrmE GTPase family. In terms of assembly, homodimer. Heterotetramer of two MnmE and two MnmG subunits. The cofactor is K(+).

Its subcellular location is the cytoplasm. Functionally, exhibits a very high intrinsic GTPase hydrolysis rate. Involved in the addition of a carboxymethylaminomethyl (cmnm) group at the wobble position (U34) of certain tRNAs, forming tRNA-cmnm(5)s(2)U34. This chain is tRNA modification GTPase MnmE, found in Borrelia garinii subsp. bavariensis (strain ATCC BAA-2496 / DSM 23469 / PBi) (Borreliella bavariensis).